A 175-amino-acid polypeptide reads, in one-letter code: MSYNCCSGNFSSRSCGDYLRYPASSRGFSYPSNLVYSTDLCSPSTCQLGSSLYRGCQEICWEPTSCQTSYVESSPCQTSCYRPRTSLLCSPCKTTYSGSLGFGSSSCRSLGYGSRSCYSVGCGSSGVRSLGYGSCGFPSLGYGSGFCRPTYLASRSCQSPCYRPAYGSTFCRSTC.

Tandem repeats lie at residues 46-55 (CQLGSSLYRG), 56-65 (CQEICWEPTS), 66-75 (CQTSYVESSP), 76-85 (CQTSCYRPRT), and 92-101 (CKTTYSGSLG). Residues 46–101 (CQLGSSLYRGCQEICWEPTSCQTSYVESSPCQTSCYRPRTSLLCSPCKTTYSGSLG) form a 5 X 10 AA approximate repeats region.

The protein belongs to the PMG family. Interacts with hair keratins.

Its function is as follows. In the hair cortex, hair keratin intermediate filaments are embedded in an interfilamentous matrix, consisting of hair keratin-associated proteins (KRTAP), which are essential for the formation of a rigid and resistant hair shaft through their extensive disulfide bond cross-linking with abundant cysteine residues of hair keratins. The matrix proteins include the high-sulfur and high-glycine-tyrosine keratins. This chain is Keratin-associated protein 13-2 (KRTAP13-2), found in Homo sapiens (Human).